The following is a 592-amino-acid chain: Protein phosphatase EYA1 (592 aa).

Disordered regions lie at residues 1–95 and 240–320; these read MEMQ…RPYP and MTSS…PDSD. A compositionally biased stretch (low complexity) spans 8-26; the sequence is SPHSRLSGSSESPSGPKLG. Positions 28–63 are enriched in polar residues; that stretch reads SHINSNSMTPNGTEVKTEPMSSSETASTTADGSLNN. Low complexity-rich tracts occupy residues 64–75 and 241–253; these read FSGSAIGSSSFS and TSSN…PSTN. The span at 254 to 287 shows a compositional bias: polar residues; it reads ATYQLQEPPSGITSQAVTDPTAEYSTIHSPSTPI. Basic and acidic residues predominate over residues 288-303; it reads KDSDSDRLRRGSDGKS. Asp328 functions as the Nucleophile in the catalytic mechanism. Mg(2+)-binding residues include Asp328, Asp330, and Asp556. Asp330 serves as the catalytic Proton donor.

It belongs to the HAD-like hydrolase superfamily. EYA family. As to quaternary structure, probably interacts with SIX2, SIX4 and SIX5. Interacts with H2AX in response to DNA damage. Interacts with SIX3; promotes EYA1 translocation to the nucleus. The cofactor is Mg(2+). Post-translationally, sumoylated with SUMO1. In terms of tissue distribution, in the embryo, highly expressed in kidney with lower levels in brain. Weakly expressed in lung. In the adult, highly expressed in heart and skeletal muscle. Weakly expressed in brain and liver. No expression in eye or kidney.

It localises to the cytoplasm. The protein resides in the nucleus. The enzyme catalyses O-phospho-L-tyrosyl-[protein] + H2O = L-tyrosyl-[protein] + phosphate. It catalyses the reaction O-phospho-L-seryl-[protein] + H2O = L-seryl-[protein] + phosphate. The catalysed reaction is O-phospho-L-threonyl-[protein] + H2O = L-threonyl-[protein] + phosphate. Functionally, functions both as protein phosphatase and as transcriptional coactivator for SIX1, and probably also for SIX2, SIX4 and SIX5. Tyrosine phosphatase that dephosphorylates 'Tyr-142' of histone H2AX (H2AXY142ph) and promotes efficient DNA repair via the recruitment of DNA repair complexes containing MDC1. 'Tyr-142' phosphorylation of histone H2AX plays a central role in DNA repair and acts as a mark that distinguishes between apoptotic and repair responses to genotoxic stress. Its function as histone phosphatase may contribute to its function in transcription regulation during organogenesis. Also has phosphatase activity with proteins phosphorylated on Ser and Thr residues (in vitro). Required for normal embryonic development of the craniofacial and trunk skeleton, kidneys and ears. Together with SIX1, it plays an important role in hypaxial muscle development; in this it is functionally redundant with EYA2. The polypeptide is Protein phosphatase EYA1 (EYA1) (Homo sapiens (Human)).